A 316-amino-acid chain; its full sequence is 33 kDa chaperonin (316 aa).

Intrachain disulfides connect Cys239–Cys241 and Cys272–Cys275.

Belongs to the HSP33 family. Under oxidizing conditions two disulfide bonds are formed involving the reactive cysteines. Under reducing conditions zinc is bound to the reactive cysteines and the protein is inactive.

It is found in the cytoplasm. Functionally, redox regulated molecular chaperone. Protects both thermally unfolding and oxidatively damaged proteins from irreversible aggregation. Plays an important role in the bacterial defense system toward oxidative stress. This is 33 kDa chaperonin from Clostridium perfringens (strain SM101 / Type A).